Here is a 206-residue protein sequence, read N- to C-terminus: MDYATRAAGGLVPVVIEQSARGERAFDIYSRLLKERVIFLVGQVEDYMANLVIAQLLFLESENPDKDIHLYINSPGGLVTAGLAIYDTMQFIKPDVSTLCVGQAASMGALLLAGGAAGKRYCLPHSRIMIHQPLGGFQGQASDIDIHAREILAVRDRLNKILAHHTGQPIEKIQIDTDRDNFMGGNDAVEYGLIDKVLVSRASGAA.

The active-site Nucleophile is the S106. Residue H131 is part of the active site.

Belongs to the peptidase S14 family. Fourteen ClpP subunits assemble into 2 heptameric rings which stack back to back to give a disk-like structure with a central cavity, resembling the structure of eukaryotic proteasomes.

It localises to the cytoplasm. It catalyses the reaction Hydrolysis of proteins to small peptides in the presence of ATP and magnesium. alpha-casein is the usual test substrate. In the absence of ATP, only oligopeptides shorter than five residues are hydrolyzed (such as succinyl-Leu-Tyr-|-NHMec, and Leu-Tyr-Leu-|-Tyr-Trp, in which cleavage of the -Tyr-|-Leu- and -Tyr-|-Trp bonds also occurs).. Functionally, cleaves peptides in various proteins in a process that requires ATP hydrolysis. Has a chymotrypsin-like activity. Plays a major role in the degradation of misfolded proteins. The chain is ATP-dependent Clp protease proteolytic subunit 1 from Methylococcus capsulatus (strain ATCC 33009 / NCIMB 11132 / Bath).